Here is a 122-residue protein sequence, read N- to C-terminus: Large ribosomal subunit protein bL12 (122 aa).

The protein belongs to the bacterial ribosomal protein bL12 family. In terms of assembly, homodimer. Part of the ribosomal stalk of the 50S ribosomal subunit. Forms a multimeric L10(L12)X complex, where L10 forms an elongated spine to which 2 to 4 L12 dimers bind in a sequential fashion. Binds GTP-bound translation factors.

In terms of biological role, forms part of the ribosomal stalk which helps the ribosome interact with GTP-bound translation factors. Is thus essential for accurate translation. This Dichelobacter nodosus (strain VCS1703A) protein is Large ribosomal subunit protein bL12.